Reading from the N-terminus, the 131-residue chain is Small ribosomal subunit protein uS8 (131 aa).

The protein belongs to the universal ribosomal protein uS8 family. As to quaternary structure, part of the 30S ribosomal subunit. Contacts proteins S5 and S12.

Functionally, one of the primary rRNA binding proteins, it binds directly to 16S rRNA central domain where it helps coordinate assembly of the platform of the 30S subunit. This chain is Small ribosomal subunit protein uS8, found in Rhizorhabdus wittichii (strain DSM 6014 / CCUG 31198 / JCM 15750 / NBRC 105917 / EY 4224 / RW1) (Sphingomonas wittichii).